The following is a 59-amino-acid chain: UPF0339 protein CC_2965 (59 aa).

This sequence belongs to the UPF0339 family.

The sequence is that of UPF0339 protein CC_2965 from Caulobacter vibrioides (strain ATCC 19089 / CIP 103742 / CB 15) (Caulobacter crescentus).